A 316-amino-acid polypeptide reads, in one-letter code: Ribose-phosphate pyrophosphokinase (316 aa).

Residues 42–44 (DGE) and 101–102 (RQ) each bind ATP. The Mg(2+) site is built by H135 and D174. The active site involves K197. Residues R199, D223, and 227–231 (DTAGT) each bind D-ribose 5-phosphate.

It belongs to the ribose-phosphate pyrophosphokinase family. Class I subfamily. Homohexamer. Mg(2+) serves as cofactor.

The protein localises to the cytoplasm. It catalyses the reaction D-ribose 5-phosphate + ATP = 5-phospho-alpha-D-ribose 1-diphosphate + AMP + H(+). The protein operates within metabolic intermediate biosynthesis; 5-phospho-alpha-D-ribose 1-diphosphate biosynthesis; 5-phospho-alpha-D-ribose 1-diphosphate from D-ribose 5-phosphate (route I): step 1/1. Involved in the biosynthesis of the central metabolite phospho-alpha-D-ribosyl-1-pyrophosphate (PRPP) via the transfer of pyrophosphoryl group from ATP to 1-hydroxyl of ribose-5-phosphate (Rib-5-P). The chain is Ribose-phosphate pyrophosphokinase from Halalkalibacterium halodurans (strain ATCC BAA-125 / DSM 18197 / FERM 7344 / JCM 9153 / C-125) (Bacillus halodurans).